The primary structure comprises 397 residues: Riboflavin biosynthesis protein RibBA (397 aa).

A DHBP synthase region spans residues 1–199 (MFHRIEEALE…IEDLIAYRRH (199 aa)). Residues 26–27 (RE), Asp31, 138–142 (RAGHT), and Glu162 contribute to the D-ribulose 5-phosphate site. Glu27 lines the Mg(2+) pocket. His141 is a Mg(2+) binding site. The GTP cyclohydrolase II stretch occupies residues 200–397 (HETLVTREVE…VNKLGHLLNL (198 aa)). A GTP-binding site is contributed by 250-254 (RVHSE). Zn(2+) contacts are provided by Cys255, Cys266, and Cys268. GTP-binding positions include Gln271, 293–295 (EGR), and Thr315. Residue Asp327 is the Proton acceptor; for GTP cyclohydrolase activity of the active site. Arg329 acts as the Nucleophile; for GTP cyclohydrolase activity in catalysis. Residues Thr350 and Lys355 each coordinate GTP.

It in the N-terminal section; belongs to the DHBP synthase family. The protein in the C-terminal section; belongs to the GTP cyclohydrolase II family. Mg(2+) is required as a cofactor. Mn(2+) serves as cofactor. The cofactor is Zn(2+).

It carries out the reaction D-ribulose 5-phosphate = (2S)-2-hydroxy-3-oxobutyl phosphate + formate + H(+). It catalyses the reaction GTP + 4 H2O = 2,5-diamino-6-hydroxy-4-(5-phosphoribosylamino)-pyrimidine + formate + 2 phosphate + 3 H(+). It functions in the pathway cofactor biosynthesis; riboflavin biosynthesis; 2-hydroxy-3-oxobutyl phosphate from D-ribulose 5-phosphate: step 1/1. It participates in cofactor biosynthesis; riboflavin biosynthesis; 5-amino-6-(D-ribitylamino)uracil from GTP: step 1/4. Functionally, catalyzes the conversion of D-ribulose 5-phosphate to formate and 3,4-dihydroxy-2-butanone 4-phosphate. Catalyzes the conversion of GTP to 2,5-diamino-6-ribosylamino-4(3H)-pyrimidinone 5'-phosphate (DARP), formate and pyrophosphate. This chain is Riboflavin biosynthesis protein RibBA, found in Bacillus cereus (strain B4264).